The primary structure comprises 291 residues: Bis(5'-nucleosyl)-tetraphosphatase, symmetrical (291 aa).

Belongs to the Ap4A hydrolase family.

The catalysed reaction is P(1),P(4)-bis(5'-adenosyl) tetraphosphate + H2O = 2 ADP + 2 H(+). Hydrolyzes diadenosine 5',5'''-P1,P4-tetraphosphate to yield ADP. In Coxiella burnetii (strain Dugway 5J108-111), this protein is Bis(5'-nucleosyl)-tetraphosphatase, symmetrical.